We begin with the raw amino-acid sequence, 79 residues long: Toxin ICK-20 (79 aa).

An N-terminal signal peptide occupies residues 1–20 (MMKYFLVLCLVVLGVAAVQA). 4 disulfide bridges follow: cysteine 43–cysteine 57, cysteine 50–cysteine 61, cysteine 56–cysteine 78, and cysteine 68–cysteine 74. Asparagine 71 carries an N-linked (GlcNAc...) asparagine glycan.

The protein belongs to the neurotoxin 13 (insecticidal toxin ABC) family. ICK-21 subfamily. Expressed by the venom gland.

It localises to the secreted. Ion channel inhibitor. The protein is Toxin ICK-20 of Trittame loki (Brush-footed trapdoor spider).